Here is a 732-residue protein sequence, read N- to C-terminus: Aldehyde oxidoreductase molybdenum-binding subunit PaoC (732 aa).

Mo-molybdopterin cytosine dinucleotide-binding positions include Gly-241–Phe-242, Ile-468–Thr-470, Gly-511–Ala-512, Arg-615–Thr-621, Gln-625, and Lys-688–Gly-691. Glu-692 serves as the catalytic Proton acceptor.

This sequence belongs to the xanthine dehydrogenase family. Heterotrimer composed of PaoA, PaoB and PaoC. The cofactor is Mo-molybdopterin cytosine dinucleotide.

The protein resides in the periplasm. The catalysed reaction is an aldehyde + A + H2O = a carboxylate + AH2 + H(+). The complex requires PaoD for activity. Functionally, oxidizes aldehydes to the corresponding carboxylic acids with a preference for aromatic aldehydes. It might play a role in the detoxification of aldehydes to avoid cell damage. The sequence is that of Aldehyde oxidoreductase molybdenum-binding subunit PaoC from Escherichia coli (strain K12).